Consider the following 196-residue polypeptide: DnaA initiator-associating protein DiaA (196 aa).

Residues 34–196 (LVQSLLNGNK…DNTLFPHQND (163 aa)) enclose the SIS domain.

The protein belongs to the SIS family. DiaA subfamily. As to quaternary structure, homotetramer; dimer of dimers.

In terms of biological role, required for the timely initiation of chromosomal replication via direct interactions with the DnaA initiator protein. The polypeptide is DnaA initiator-associating protein DiaA (Yersinia pestis bv. Antiqua (strain Antiqua)).